A 549-amino-acid polypeptide reads, in one-letter code: Chaperonin GroEL (549 aa).

ATP-binding positions include 29-32, lysine 50, 86-90, glycine 418, and aspartate 499; these read TAGP and DGTTT.

This sequence belongs to the chaperonin (HSP60) family. As to quaternary structure, forms a cylinder of 14 subunits composed of two heptameric rings stacked back-to-back. Interacts with the co-chaperonin GroES.

It is found in the cytoplasm. The enzyme catalyses ATP + H2O + a folded polypeptide = ADP + phosphate + an unfolded polypeptide.. In terms of biological role, together with its co-chaperonin GroES, plays an essential role in assisting protein folding. The GroEL-GroES system forms a nano-cage that allows encapsulation of the non-native substrate proteins and provides a physical environment optimized to promote and accelerate protein folding. The chain is Chaperonin GroEL from Wolbachia pipientis wMel.